The sequence spans 148 residues: MPNIDNTPLPSSFDAHPEFFQETKWQKVTRRLKEEPLIPIGYAATSYALWRAYKSMKARDSVELNRMFRARIYGHAFTLFAIVAGGIYYGQERKQRKEFEKALQEKQDQEKRDAWLRELEVRDKEDKDWRQRHAAMEMAAKEAEKKMG.

An HIG1 domain is found at 9-100; sequence LPSSFDAHPE…QERKQRKEFE (92 aa). 2 helical membrane-spanning segments follow: residues 36–53 and 72–89; these read PLIPIGYAATSYALWRAY and IYGHAFTLFAIVAGGIYY. Positions 89–148 form a coiled coil; it reads YGQERKQRKEFEKALQEKQDQEKRDAWLRELEVRDKEDKDWRQRHAAMEMAAKEAEKKMG.

The protein belongs to the RCF1 family. As to quaternary structure, associates with the respiratory chain complex III/complex IV supercomplex.

It is found in the mitochondrion membrane. Its function is as follows. Cytochrome c oxidase subunit which plays a role in assembly of respiratory supercomplexes. The sequence is that of Respiratory supercomplex factor 1, mitochondrial (RCF1) from Ajellomyces dermatitidis (strain ER-3 / ATCC MYA-2586) (Blastomyces dermatitidis).